The following is a 143-amino-acid chain: Actinoxanthin (143 aa).

The signal sequence occupies residues M1–A33. 2 disulfide bridges follow: C69/C78 and C119/C124.

This sequence belongs to the neocarzinostatin family.

Binds non-covalently to a chromophore which is the cytotoxic and mutagenic component of the antibiotic. The chromophore binds to DNA as a weak intercalator and causes single- and double-strand breaks. This Streptomyces globisporus protein is Actinoxanthin (axnA).